The primary structure comprises 236 residues: Orotidine 5'-phosphate decarboxylase (236 aa).

Residues aspartate 17, lysine 39, 66–75 (DLKFHDIPNT), threonine 125, arginine 186, glutamine 195, glycine 215, and arginine 216 each bind substrate. The active-site Proton donor is the lysine 68.

The protein belongs to the OMP decarboxylase family. Type 1 subfamily. In terms of assembly, homodimer.

It catalyses the reaction orotidine 5'-phosphate + H(+) = UMP + CO2. It participates in pyrimidine metabolism; UMP biosynthesis via de novo pathway; UMP from orotate: step 2/2. Functionally, catalyzes the decarboxylation of orotidine 5'-monophosphate (OMP) to uridine 5'-monophosphate (UMP). The sequence is that of Orotidine 5'-phosphate decarboxylase from Buchnera aphidicola subsp. Acyrthosiphon pisum (strain APS) (Acyrthosiphon pisum symbiotic bacterium).